The following is a 1312-amino-acid chain: MKALDEPPYLTVGTDVSAKYRGAFCEAKIKTAKRLVKVKVTFRHDSSTVEVQDDHIKGPLKVGAIVEVKNLDGAYQEAVINKLTDASWYTVVFDDGDEKTLRRSSLCLKGERHFAESETLDQLPLTNPEHFGTPVIGKKTNRGRRSNHIPEEESSSSSSDEDEDDRKQIDELLGKVVCVDYISLDKKKALWFPALVVCPDCSDEIAVKKDNILVRSFKDGKFTSVPRKDVHEITSDTAPKPDAVLKQAFEQALEFHKSRTIPANWKTELKEDSSSSEAEEEEEEEDDEKEKEDNSSEEEEEIEPFPEERENFLQQLYKFMEDRGTPINKRPVLGYRNLNLFKLFRLVHKLGGFDNIESGAVWKQVYQDLGIPVLNSAAGYNVKCAYKKYLYGFEEYCRSANIEFQMALPEKVVNKQCKECENVKEIKVKEENETEIKEIKMEEERNIIPREEKPIEDEIERKENIKPSLGSKKNLLESIPTHSDQEKEVNIKKPEDNENLDDKDDDTTRVDESLNIKVEAEEEKAKSGDETNKEEDEDDEEAEEEEEEEEEEEDEDDDDNNEEEEFECYPPGMKVQVRYGRGKNQKMYEASIKDSDVEGGEVLYLVHYCGWNVRYDEWIKADKIVRPADKNVPKIKHRKKIKNKLDKEKDKDEKYSPKNCKLRRLSKPPFQTNPSPEMVSKLDLTDAKNSDTAHIKSIEITSILNGLQASESSAEDSEQEDERGAQDMDNNGKEESKIDHLTNNRNDLISKEEQNSSSLLEENKVHADLVISKPVSKSPERLRKDIEVLSEDTDYEEDEVTKKRKDVKKDTTDKSSKPQIKRGKRRYCNTEECLKTGSPGKKEEKAKNKESLCMENSSNSSSDEDEEETKAKMTPTKKYNGLEEKRKSLRTTGFYSGFSEVAEKRIKLLNNSDERLQNSRAKDRKDVWSSIQGQWPKKTLKELFSDSDTEAAASPPHPAPEEGVAEESLQTVAEEESCSPSVELEKPPPVNVDSKPIEEKTVEVNDRKAEFPSSGSNSVLNTPPTTPESPSSVTVTEGSRQQSSVTVSEPLAPNQEEVRSIKSETDSTIEVDSVAGELQDLQSEGNSSPAGFDASVSSSSSNQPEPEHPEKACTGQKRVKDAQGGGSSSKKQKRSHKATVVNNKKKGKGTNSSDSEELSAGESITKSQPVKSVSTGMKSHSTKSPARTQSPGKCGKNGDKDPDLKEPSNRLPKVYKWSFQMSDLENMTSAERITILQEKLQEIRKHYLSLKSEVASIDRRRKRLKKKERESAATSSSSSSPSSSSITAAVMLTLAEPSMSSASQNGMSVECR.

Disordered regions lie at residues 124 to 166 (PLTN…EDDR) and 266 to 306 (KTEL…EPFP). Residues serine 276, serine 295, and serine 296 each carry the phosphoserine modification. The span at 277–305 (EAEEEEEEEDDEKEKEDNSSEEEEEIEPF) shows a compositional bias: acidic residues. The ARID domain maps to 306-398 (PEERENFLQQ…YLYGFEEYCR (93 aa)). Glycyl lysine isopeptide (Lys-Gly) (interchain with G-Cter in SUMO2) cross-links involve residues lysine 429, lysine 440, and lysine 462. 5 disordered regions span residues 458–577 (EIER…KVQV), 635–680 (IKHR…EMVS), 708–894 (QASE…TTGF), 909–1212 (LNNS…NRLP), and 1252–1288 (SEVASIDRRRKRLKKKERESAATSSSSSSPSSSSITA). Residues 465 to 473 (IKPSLGSKK) are antigenic epitope. Serine 483 bears the Phosphoserine mark. Residues 483 to 496 (SDQEKEVNIKKPED) are compositionally biased toward basic and acidic residues. Lysine 517 is covalently cross-linked (Glycyl lysine isopeptide (Lys-Gly) (interchain with G-Cter in SUMO2)). Residues 532 to 567 (NKEEDEDDEEAEEEEEEEEEEEDEDDDDNNEEEEFE) show a composition bias toward acidic residues. The Tudor-knot domain occupies 572-624 (GMKVQVRYGRGKNQKMYEASIKDSDVEGGEVLYLVHYCGWNVRYDEWIKADKI). Basic and acidic residues predominate over residues 643 to 656 (NKLDKEKDKDEKYS). A phosphoserine mark is found at serine 666, serine 675, and serine 717. 2 stretches are compositionally biased toward basic and acidic residues: residues 722 to 754 (ERGAQDMDNNGKEESKIDHLTNNRNDLISKEEQ) and 778 to 787 (SPERLRKDIE). Positions 728-754 (MDNNGKEESKIDHLTNNRNDLISKEEQ) form a coiled coil. Lysine 751 participates in a covalent cross-link: Glycyl lysine isopeptide (Lys-Gly) (interchain with G-Cter in SUMO2). Residues serine 778 and serine 790 each carry the phosphoserine modification. A compositionally biased stretch (acidic residues) spans 788–799 (VLSEDTDYEEDE). Threonine 793 carries the post-translational modification Phosphothreonine. Basic and acidic residues-rich tracts occupy residues 807–816 (VKKDTTDKSS), 828–852 (CNTEECLKTGSPGKKEEKAKNKESL), 909–927 (LNNSDERLQNSRAKDRKDV), and 995–1010 (KPIEEKTVEVNDRKAE). Phosphoserine is present on serine 1014. The residue at position 1026 (threonine 1026) is a Phosphothreonine. Residues 1028 to 1037 (ESPSSVTVTE) show a composition bias toward low complexity. The residue at position 1029 (serine 1029) is a Phosphoserine. Residues 1038–1047 (GSRQQSSVTV) show a composition bias toward polar residues. Over residues 1056–1065 (EEVRSIKSET) the composition is skewed to basic and acidic residues. Residues 1087–1101 (SSPAGFDASVSSSSS) show a composition bias toward low complexity. Residues 1130–1137 (KKQKRSHK) form an antigenic epitope region. Residues 1130–1148 (KKQKRSHKATVVNNKKKGK) are compositionally biased toward basic residues. Residue threonine 1150 is modified to Phosphothreonine. 4 positions are modified to phosphoserine: serine 1152, serine 1153, serine 1155, and serine 1159. Positions 1162–1191 (ESITKSQPVKSVSTGMKSHSTKSPARTQSP) are enriched in polar residues. Over residues 1196–1208 (KNGDKDPDLKEPS) the composition is skewed to basic and acidic residues. A coiled-coil region spans residues 1231–1270 (ERITILQEKLQEIRKHYLSLKSEVASIDRRRKRLKKKERE). Residues 1272–1288 (AATSSSSSSPSSSSITA) show a composition bias toward low complexity.

Component of a Sin3A corepressor complex consisting of SIN3A, SAP130, SUDS3/SAP45, SAP180, HDAC1 and HDAC2. Interacts with ARID4A. Interacts with AR. As to expression, highly expressed in the testis and in breast, lung, colon, pancreatic and ovarian cancers. Expressed at low levels in the thymus, prostate and ovary.

Its subcellular location is the nucleus. It localises to the cytoplasm. Functionally, acts as a transcriptional repressor. May function in the assembly and/or enzymatic activity of the Sin3A corepressor complex or in mediating interactions between the complex and other regulatory complexes. Plays a role in the regulation of epigenetic modifications at the PWS/AS imprinting center near the SNRPN promoter, where it might function as part of a complex with RB1 and ARID4A. Involved in spermatogenesis, together with ARID4A, where it functions as a transcriptional coactivator for AR (androgen receptor) and enhances expression of genes required for sperm maturation. Regulates expression of the tight junction protein CLDN3 in the testis, which is important for integrity of the blood-testis barrier. Plays a role in myeloid homeostasis where it regulates the histone methylation state of bone marrow cells and expression of various genes involved in hematopoiesis. May function as a leukemia suppressor. The sequence is that of AT-rich interactive domain-containing protein 4B (ARID4B) from Homo sapiens (Human).